The sequence spans 401 residues: Probable cysteine desulfurase (401 aa).

An N6-(pyridoxal phosphate)lysine modification is found at Lys223.

Belongs to the class-V pyridoxal-phosphate-dependent aminotransferase family. Csd subfamily. It depends on pyridoxal 5'-phosphate as a cofactor.

The catalysed reaction is (sulfur carrier)-H + L-cysteine = (sulfur carrier)-SH + L-alanine. Catalyzes the removal of elemental sulfur and selenium atoms from L-cysteine, L-cystine, L-selenocysteine, and L-selenocystine to produce L-alanine. This is Probable cysteine desulfurase (csdA) from Pseudomonas putida (strain ATCC 47054 / DSM 6125 / CFBP 8728 / NCIMB 11950 / KT2440).